We begin with the raw amino-acid sequence, 361 residues long: Dihydroorotate dehydrogenase (quinone) (361 aa).

Residues 69-73 and Thr-93 contribute to the FMN site; that span reads AGFDK. Lys-73 contacts substrate. 118-122 contributes to the substrate binding site; it reads NRLGF. The FMN site is built by Asn-147 and Asn-180. Asn-180 contacts substrate. Ser-183 functions as the Nucleophile in the catalytic mechanism. Residue Asn-185 participates in substrate binding. FMN-binding residues include Lys-221 and Thr-249. 250-251 is a substrate binding site; sequence NT. Residues Gly-271, Gly-300, and 321 to 322 contribute to the FMN site; that span reads YT.

Belongs to the dihydroorotate dehydrogenase family. Type 2 subfamily. In terms of assembly, monomer. It depends on FMN as a cofactor.

It is found in the cell membrane. The enzyme catalyses (S)-dihydroorotate + a quinone = orotate + a quinol. It functions in the pathway pyrimidine metabolism; UMP biosynthesis via de novo pathway; orotate from (S)-dihydroorotate (quinone route): step 1/1. Its function is as follows. Catalyzes the conversion of dihydroorotate to orotate with quinone as electron acceptor. The protein is Dihydroorotate dehydrogenase (quinone) of Roseiflexus sp. (strain RS-1).